Consider the following 300-residue polypeptide: C-5 sterol desaturase (300 aa).

Helical transmembrane passes span 3–23, 68–88, 91–111, and 147–167; these read DPVL…WTAA, SLAL…QLSA, WYTW…YHRI, and ILMW…FCSW. The 134-residue stretch at 94-227 folds into the Fatty acid hydroxylase domain; the sequence is WVIAIVGVDL…LIIWDRLFGS (134 aa).

This sequence belongs to the sterol desaturase family.

The protein localises to the cell membrane. The chain is C-5 sterol desaturase (erg3) from Mycobacterium bovis (strain ATCC BAA-935 / AF2122/97).